Reading from the N-terminus, the 28-residue chain is Toxin a (28 aa).

One can recognise an LCN-type CS-alpha/beta domain in the interval 3 to 28 (VPGNYPLDSYGNCYPCTILGDNQYCI).

It belongs to the long (3 C-C) scorpion toxin superfamily. In terms of tissue distribution, expressed by the venom gland.

Its subcellular location is the secreted. Binds to sodium channels (Nav) and affects the channel activation process. The chain is Toxin a from Androctonus crassicauda (Arabian fat-tailed scorpion).